The chain runs to 241 residues: Golgi-associated RAB2 interactor protein 6 (241 aa).

It belongs to the GARIN family.

The polypeptide is Golgi-associated RAB2 interactor protein 6 (Homo sapiens (Human)).